The following is a 500-amino-acid chain: Glutamyl-tRNA(Gln) amidotransferase subunit A (500 aa).

Catalysis depends on charge relay system residues Lys-81 and Ser-161. Ser-185 functions as the Acyl-ester intermediate in the catalytic mechanism.

Belongs to the amidase family. GatA subfamily. In terms of assembly, heterotrimer of A, B and C subunits.

It catalyses the reaction L-glutamyl-tRNA(Gln) + L-glutamine + ATP + H2O = L-glutaminyl-tRNA(Gln) + L-glutamate + ADP + phosphate + H(+). Functionally, allows the formation of correctly charged Gln-tRNA(Gln) through the transamidation of misacylated Glu-tRNA(Gln) in organisms which lack glutaminyl-tRNA synthetase. The reaction takes place in the presence of glutamine and ATP through an activated gamma-phospho-Glu-tRNA(Gln). This chain is Glutamyl-tRNA(Gln) amidotransferase subunit A, found in Rhodospirillum rubrum (strain ATCC 11170 / ATH 1.1.1 / DSM 467 / LMG 4362 / NCIMB 8255 / S1).